Consider the following 650-residue polypeptide: Macrolide export ATP-binding/permease protein MacB (650 aa).

The ABC transporter domain maps to 9-248; the sequence is IELIDLERVF…RPLGRPPGGA (240 aa). 45-52 lines the ATP pocket; it reads GQSGSGKS. A run of 4 helical transmembrane segments spans residues 276 to 296, 525 to 545, 580 to 600, and 615 to 635; these read ALTL…MAIG, LTLL…IGVM, AVAV…GAAL, and PPIV…YLPA.

The protein belongs to the ABC transporter superfamily. Macrolide exporter (TC 3.A.1.122) family. Homodimer.

It is found in the cell inner membrane. In terms of biological role, non-canonical ABC transporter that contains transmembrane domains (TMD), which form a pore in the inner membrane, and an ATP-binding domain (NBD), which is responsible for energy generation. Confers resistance against macrolides. The protein is Macrolide export ATP-binding/permease protein MacB of Rhodospirillum rubrum (strain ATCC 11170 / ATH 1.1.1 / DSM 467 / LMG 4362 / NCIMB 8255 / S1).